Here is a 191-residue protein sequence, read N- to C-terminus: uncharacterized protein (191 aa).

Residues 3–63 (IDRKKLILEA…EIFTTLLKEM (61 aa)) form the HTH tetR-type domain. The segment at residues 26–45 (TMDLVAKLANVGKGTIYTFF) is a DNA-binding region (H-T-H motif).

This is an uncharacterized protein from Bacillus subtilis (strain 168).